The chain runs to 403 residues: Creatinase (403 aa).

The active site involves histidine 232.

The protein belongs to the peptidase M24 family. Creatinase subfamily. In terms of assembly, homodimer.

It carries out the reaction creatine + H2O = sarcosine + urea. In Flavobacterium sp. (strain U-188), this protein is Creatinase.